The primary structure comprises 165 residues: V-type proton ATPase 16 kDa proteolipid subunit (165 aa).

At 1–10 (MSSVFSGDET) the chain is on the lumenal side. A helical transmembrane segment spans residues 11–33 (APFFGFLGAASALIFSCMGAAYG). Topologically, residues 34-55 (TAKSGVGVASMGVMRPELVMKS) are cytoplasmic. Residues 56–76 (IVPVVMAGVLGIYGLIIAVII) traverse the membrane as a helical segment. Residues 77–95 (STGINPKAKPYYLFDGYAH) lie on the Lumenal side of the membrane. Residues 96–117 (LSSGLACGLAGLAAGMAIGIVG) form a helical membrane-spanning segment. The Cytoplasmic segment spans residues 118 to 129 (DAGVRANAQQPK). The chain crosses the membrane as a helical span at residues 130–155 (LFVGMILILIFAEALALYGLIVGIIL). The Lumenal portion of the chain corresponds to 156 to 165 (SSRAGQSRAD).

It belongs to the V-ATPase proteolipid subunit family. In terms of assembly, V-ATPase is a heteromultimeric enzyme composed of a peripheral catalytic V1 complex (main components: subunits A, B, C, D, E, and F) attached to an integral membrane V0 proton pore complex (main component: the proteolipid protein; which is present as a hexamer that forms the proton-conducting pore).

It is found in the vacuole membrane. Proton-conducting pore forming subunit of the membrane integral V0 complex of vacuolar ATPase. V-ATPase is responsible for acidifying a variety of intracellular compartments in eukaryotic cells. In Oryza sativa subsp. indica (Rice), this protein is V-type proton ATPase 16 kDa proteolipid subunit (VATP-P1).